The primary structure comprises 344 residues: Adenine deaminase (344 aa).

H24, H26, and H204 together coordinate Zn(2+). E207 (proton donor) is an active-site residue. D285 is a Zn(2+) binding site. D286 serves as a coordination point for substrate.

Belongs to the metallo-dependent hydrolases superfamily. Adenosine and AMP deaminases family. Adenine deaminase type 2 subfamily. Zn(2+) serves as cofactor.

The enzyme catalyses adenine + H2O + H(+) = hypoxanthine + NH4(+). Catalyzes the hydrolytic deamination of adenine to hypoxanthine. Plays an important role in the purine salvage pathway and in nitrogen catabolism. The chain is Adenine deaminase from Caulobacter vibrioides (strain ATCC 19089 / CIP 103742 / CB 15) (Caulobacter crescentus).